The following is a 459-amino-acid chain: 11S globulin seed storage protein 2 (459 aa).

Residues 1 to 21 (MVAFKFLLALSLSLLVSAAIA) form the signal peptide. 2 disulfides stabilise this stretch: C34–C67 and C110–C284. Cupin type-1 domains follow at residues 37 to 237 (QRIS…ETIR) and 290 to 439 (TNVE…NQAQ). The segment at 118–139 (RSQRTMERTEASEQQDRGSVRD) is disordered. The segment covering 121 to 139 (RTMERTEASEQQDRGSVRD) has biased composition (basic and acidic residues).

Belongs to the 11S seed storage protein (globulins) family. As to quaternary structure, homohexamer. Each subunit is composed of an acidic and a basic chain derived from a single precursor and linked by a disulfide bond. Expressed in seeds (at protein level). Expressed in seeds.

Seed storage protein. The protein is 11S globulin seed storage protein 2 of Sesamum indicum (Oriental sesame).